Reading from the N-terminus, the 85-residue chain is Putative membrane protein insertion efficiency factor (85 aa).

The tract at residues 62–85 (PLGSDGYDPVPEPKDRKPPHSPAG) is disordered.

It belongs to the UPF0161 family.

The protein resides in the cell inner membrane. Functionally, could be involved in insertion of integral membrane proteins into the membrane. The polypeptide is Putative membrane protein insertion efficiency factor (Ruegeria pomeroyi (strain ATCC 700808 / DSM 15171 / DSS-3) (Silicibacter pomeroyi)).